A 219-amino-acid chain; its full sequence is Probable glutathione S-transferase GSTF1 (219 aa).

In terms of domain architecture, GST N-terminal spans 2–83 (TPVKVFGPAQ…YILRKYKTRE (82 aa)). Glutathione-binding positions include Ser-12, 41–42 (HK), 54–55 (QI), and 67–68 (ES). In terms of domain architecture, GST C-terminal spans 91 to 219 (NLREAAMVDV…LAAVMAPQGA (129 aa)).

It belongs to the GST superfamily. Phi family. As to expression, constitutively expressed in roots.

It carries out the reaction RX + glutathione = an S-substituted glutathione + a halide anion + H(+). Functionally, conjugation of reduced glutathione to a wide number of exogenous and endogenous hydrophobic electrophiles. The sequence is that of Probable glutathione S-transferase GSTF1 (GSTF1) from Oryza sativa subsp. japonica (Rice).